Reading from the N-terminus, the 369-residue chain is tRNA/tmRNA (uracil-C(5))-methyltransferase (369 aa).

5 residues coordinate S-adenosyl-L-methionine: Gln-190, Tyr-218, Asn-223, Glu-239, and Asp-301. Cys-326 functions as the Nucleophile in the catalytic mechanism. The Proton acceptor role is filled by Glu-360.

Belongs to the class I-like SAM-binding methyltransferase superfamily. RNA M5U methyltransferase family. TrmA subfamily.

It catalyses the reaction uridine(54) in tRNA + S-adenosyl-L-methionine = 5-methyluridine(54) in tRNA + S-adenosyl-L-homocysteine + H(+). The enzyme catalyses uridine(341) in tmRNA + S-adenosyl-L-methionine = 5-methyluridine(341) in tmRNA + S-adenosyl-L-homocysteine + H(+). Dual-specificity methyltransferase that catalyzes the formation of 5-methyluridine at position 54 (m5U54) in all tRNAs, and that of position 341 (m5U341) in tmRNA (transfer-mRNA). The chain is tRNA/tmRNA (uracil-C(5))-methyltransferase from Vibrio parahaemolyticus serotype O3:K6 (strain RIMD 2210633).